Here is a 290-residue protein sequence, read N- to C-terminus: Fat storage-inducing transmembrane protein 1 (290 aa).

Helical transmembrane passes span Met1–Thr21, His26–Ser46, Ser65–Val85, Leu173–Leu193, and Ile205–Leu225.

The protein belongs to the FIT family. FIT1 subfamily.

Its subcellular location is the endoplasmic reticulum membrane. May play an important role in the formation of lipid droplets (LDs) which are storage organelles at the center of lipid and energy homeostasis. May directly bind to diacylglycerol (DAGs) and triacylglycerol. The protein is Fat storage-inducing transmembrane protein 1 (fitm1l) of Danio rerio (Zebrafish).